A 237-amino-acid polypeptide reads, in one-letter code: Ribonuclease PH (237 aa).

Phosphate-binding positions include arginine 86 and 124–126; that span reads GTR.

Belongs to the RNase PH family. As to quaternary structure, homohexameric ring arranged as a trimer of dimers.

It catalyses the reaction tRNA(n+1) + phosphate = tRNA(n) + a ribonucleoside 5'-diphosphate. Functionally, phosphorolytic 3'-5' exoribonuclease that plays an important role in tRNA 3'-end maturation. Removes nucleotide residues following the 3'-CCA terminus of tRNAs; can also add nucleotides to the ends of RNA molecules by using nucleoside diphosphates as substrates, but this may not be physiologically important. Probably plays a role in initiation of 16S rRNA degradation (leading to ribosome degradation) during starvation. The polypeptide is Ribonuclease PH (Dinoroseobacter shibae (strain DSM 16493 / NCIMB 14021 / DFL 12)).